A 305-amino-acid polypeptide reads, in one-letter code: Beta-lactamase ROB-1 (305 aa).

Positions 1 to 33 are cleaved as a signal peptide; sequence MLNKLKIGTLLLLTLTACSPNSVHSVTSNPQPA. Catalysis depends on serine 86, which acts as the Acyl-ester intermediate. 248-250 serves as a coordination point for substrate; the sequence is KSG.

Belongs to the class-A beta-lactamase family.

The enzyme catalyses a beta-lactam + H2O = a substituted beta-amino acid. The sequence is that of Beta-lactamase ROB-1 (rob1) from Actinobacillus pleuropneumoniae (Haemophilus pleuropneumoniae).